Reading from the N-terminus, the 261-residue chain is Aminoglycoside N(3)-acetyltransferase IV (261 aa).

Belongs to the antibiotic N-acetyltransferase family.

The catalysed reaction is a 2-deoxystreptamine antibiotic + acetyl-CoA = an N(3)-acetyl-2-deoxystreptamine antibiotic + CoA + H(+). In terms of biological role, resistance to antibiotics containing the 2-deoxy-streptamine ring including gentamicin, kanamycin, tobramycin, neomycin and apramycin. The polypeptide is Aminoglycoside N(3)-acetyltransferase IV (aacC4) (Salmonella sp).